The sequence spans 123 residues: MAATAELIPAGEVIACHTVEDWNNKLKAAKESNKLIVIDFTAVWCPPCRFIAPIFVELAKKHLDVVFFKVDVDELATVAKEFDVQAMPTFVYMKGEEKLDKVVGAAKEEIEAKLLKHSQVAAA.

The Thioredoxin domain occupies 2-119; it reads AATAELIPAG…IEAKLLKHSQ (118 aa). Cysteine 45 and cysteine 48 are joined by a disulfide.

This sequence belongs to the thioredoxin family. Plant H-type subfamily.

It is found in the cytoplasm. In terms of biological role, participates in various redox reactions through the reversible oxidation of the active center dithiol to a disulfide. The H form is known to activate a number of cytosolic enzymes. This Brassica campestris (Field mustard) protein is Thioredoxin H-type (PEC-2).